The chain runs to 230 residues: uncharacterized protein (230 aa).

Positions 2-69 (HRLAKIISNA…KPRLWIYYKP (68 aa)) constitute an S4 RNA-binding domain. D102 functions as the Nucleophile in the catalytic mechanism.

This sequence belongs to the pseudouridine synthase RsuA family.

It catalyses the reaction a uridine in RNA = a pseudouridine in RNA. This is an uncharacterized protein from Rickettsia conorii (strain ATCC VR-613 / Malish 7).